The following is a 285-amino-acid chain: MASLRDIKTRINATKKTSQITKAMEMVSTSKLNRAEQNAKSFVPYMEKIQEVVANVALGAGGASHPMLVSRPVKKTGYLVITSDRGLAGAYNSNVLRLVYQTIQKRHASPDEYAIIVIGRVGLSFFRKRNMPVILDITRLPDQPSFADIKEIARKTVGLFADGTFDELYMYYNHYVSAIQQEVTERKLLPLTDLAENKQRTVYEFEPSQEEILDVLLPQYAESLIYGALLDAKASEHAARMTAMKNATDNANELIRTLTLSYNRARQAAITQEITEIVAGANALQ.

It belongs to the ATPase gamma chain family. In terms of assembly, F-type ATPases have 2 components, CF(1) - the catalytic core - and CF(0) - the membrane proton channel. CF(1) has five subunits: alpha(3), beta(3), gamma(1), delta(1), epsilon(1). CF(0) has three main subunits: a, b and c.

It localises to the cell membrane. Functionally, produces ATP from ADP in the presence of a proton gradient across the membrane. The gamma chain is believed to be important in regulating ATPase activity and the flow of protons through the CF(0) complex. This is ATP synthase gamma chain from Geobacillus kaustophilus (strain HTA426).